Here is a 210-residue protein sequence, read N- to C-terminus: ATP-dependent Clp protease proteolytic subunit (210 aa).

The Nucleophile role is filled by Ser106. His131 is a catalytic residue.

The protein belongs to the peptidase S14 family. As to quaternary structure, fourteen ClpP subunits assemble into 2 heptameric rings which stack back to back to give a disk-like structure with a central cavity, resembling the structure of eukaryotic proteasomes.

It is found in the cytoplasm. It catalyses the reaction Hydrolysis of proteins to small peptides in the presence of ATP and magnesium. alpha-casein is the usual test substrate. In the absence of ATP, only oligopeptides shorter than five residues are hydrolyzed (such as succinyl-Leu-Tyr-|-NHMec, and Leu-Tyr-Leu-|-Tyr-Trp, in which cleavage of the -Tyr-|-Leu- and -Tyr-|-Trp bonds also occurs).. Its function is as follows. Cleaves peptides in various proteins in a process that requires ATP hydrolysis. Has a chymotrypsin-like activity. Plays a major role in the degradation of misfolded proteins. The protein is ATP-dependent Clp protease proteolytic subunit of Bartonella quintana (strain Toulouse) (Rochalimaea quintana).